We begin with the raw amino-acid sequence, 1125 residues long: Transient receptor potential cation channel subfamily A member 1 (1125 aa).

Topologically, residues 1–721 (MKRSLRRVLR…KWCAYGFRAH (721 aa)) are cytoplasmic. 9 ANK repeats span residues 63-94 (ENLC…ALNV), 98-127 (YGNT…NPNL), 131-161 (NMMA…NINL), 165-194 (NGNT…KLCK), 198-227 (WGDY…KTGY), 239-268 (KKAS…HIDM), 272-301 (AKCM…GSSD), 309-338 (NQET…DINS), and 342-371 (EGRS…KVDI). 5 cysteine pairs are disulfide-bonded: C193/C666, C463/C666, C609/C622, C622/C666, and C634/C859. The residue at position 395 (P395) is a 4-hydroxyproline; transient. ANK repeat units follow at residues 413-442 (DGCT…SVHS), 446-475 (DKKS…DTRL), 482-511 (HGMT…LFLS), 514-543 (NGWT…KCTD), and 548-577 (EGNT…DILL). Positions 415 and 422 each coordinate (E)-cinnamaldehyde. C622 lines the (E)-cinnamaldehyde pocket. Position 634 is a cysteine sulfenic acid (-SOH); transient; in hyperoxia (C634). C642, C666, and K712 together coordinate (E)-cinnamaldehyde. A helical membrane pass occupies residues 722-742 (MMNLGSYCLGLIPMTLLVVKI). Residues 743–767 (QPGMAFNSTGIINETISTHEERINT) are Extracellular-facing. N749 and N755 each carry an N-linked (GlcNAc...) asparagine glycan. A helical membrane pass occupies residues 768–788 (LNSFPLKICMILVFLSSIFGY). The Cytoplasmic portion of the chain corresponds to 789 to 806 (CKEVVQIFQQKRNYFLDY). Residues E791, Q794, N808, and E811 each contribute to the Ca(2+) site. A helical transmembrane segment spans residues 807–827 (NNALEWVIYTTSMIFVLPLFL). Over 828–832 (DIPAY) the chain is Extracellular. A helical transmembrane segment spans residues 833 to 853 (MQWQCGAIAIFFYWMNFLLYL). The Cytoplasmic segment spans residues 854-876 (QRFENCGIFIVMLEVIFKTLLRS). The residue at position 859 (C859) is a Cysteine sulfenic acid (-SOH); transient; in hyperoxia. The helical transmembrane segment at 877–897 (TGVFIFLLLAFGLSFYVLLNF) threads the bilayer. Residues 898–904 (QDAFSTP) lie on the Extracellular side of the membrane. The segment at residues 905–925 (LLSLIQTFSMMLGDINYRDAF) is an intramembrane region (pore-forming). Topologically, residues 926-937 (LEPLFRNELAYP) are extracellular. A helical membrane pass occupies residues 938-959 (VLTFGQLIAFTMFVPIVLMNLL). Residues 960–1125 (IGLAVGDIAE…THCSISHPDI (166 aa)) are Cytoplasmic-facing. Positions 1044 to 1073 (MEILKQKYRLKDLTSLLEKQHELIKLIIQK) form a coiled coil. 1048–1054 (KQKYRLK) is an a 1,2-diacyl-sn-glycero-3-phospho-(1D-myo-inositol) binding site.

The protein belongs to the transient receptor (TC 1.A.4) family. As to quaternary structure, homotetramer. Interacts with TMEM100. Interacts with EGLN1. Interacts with the scorpion wasabi receptor toxin at the same site that electrophiles but in a non-covalent manner. TRPA1 activation by electrophiles occurs though covalent modification of specific cysteine residues in the N-terminal cytoplasmic domain. Post-translationally, hydroxylation is required for TRPA1 activity inhibition in normoxia. In hypoxia, the decrease in oxygen concentration diminishes the activity of the hydroxylase EGLN1, thus relieving TRPA1 from inhibition and ultimately leading to channel activation. In terms of processing, oxidation of Cys-634 and Cys-859 in hyperoxia may override the hydroxylase EGLN1-mediated inhibition, causing TRPA1 activation. Specifically expressed in a subset of nociceptive neurons. Expressed in dorsal root ganglia.

The protein localises to the cell membrane. It carries out the reaction Ca(2+)(in) = Ca(2+)(out). The catalysed reaction is Mg(2+)(in) = Mg(2+)(out). It catalyses the reaction Na(+)(in) = Na(+)(out). The enzyme catalyses K(+)(in) = K(+)(out). It carries out the reaction Zn(2+)(in) = Zn(2+)(out). With respect to regulation, electrophilic ligands activate the channel by covalent modification of intracellular cysteines; Cys-622 plays a key role in covalent binding of electrophiles. Extracellular Ca(2+) both potentiates and inactivates TRPA1; a rapid potentiation follows by slow desensitization. Activated by increase in intracellular Ca(2+) concentration. Inhibited by ruthenium red, a potent blocker of TRPV channels and selectively by A-967079. Activated by benzyl isothiocyanate (BITC), iodoacetamide, sulfhydryl reactive agent MTSEA, N-methyl maleimide (NMM), N-ethylmaleimide (NEM), and 2-aminoethyldiphenylborinate (2-APB). Also activated by hyperoxia. Acivated by intracellular Zn(2+). TRPA1 activation may critically depend on the presence of small intracellular compounds such as polyphosphates. Its function is as follows. Ligand-activated Ca(2+)-permeable, nonselective cation channel. Involved in pain detection and possibly also in cold perception, oxygen concentration perception, cough, itch, and inner ear function. Has a relatively high Ca(2+) selectivity, with a preference for divalent over monovalent cations (Ca(2+) &gt; Ba(2+) &gt; Mg(2+) &gt; NH4(+) &gt; Li(+) &gt; K(+)), the influx of cation into the cytoplasm, leads to membrane depolarization. Has a central role in the pain response to endogenous inflammatory mediators, such as bradykinin and to a diverse array of irritants. Activated by a large variety of structurally unrelated electrophilic and non-electrophilic chemical compounds, such as allylthiocyanate (AITC) from mustard oil or wasabi, cinnamaldehyde, diallyl disulfide (DADS) from garlic, and acrolein, an environmental irritant. Electrophilic ligands activate TRPA1 by interacting with critical N-terminal Cys residues in a covalent manner. Non-electrophile agonists bind at distinct sites in the transmembrane domain to promote channel activation. Also acts as an ionotropic cannabinoid receptor by being activated by delta(9)-tetrahydrocannabinol (THC), the psychoactive component of marijuana. May be a component for the mechanosensitive transduction channel of hair cells in inner ear, thereby participating in the perception of sounds. The chain is Transient receptor potential cation channel subfamily A member 1 from Rattus norvegicus (Rat).